Here is a 208-residue protein sequence, read N- to C-terminus: Na(+)-translocating NADH-quinone reductase subunit D (208 aa).

A run of 5 helical transmembrane segments spans residues 42–62, 70–90, 103–123, 131–151, and 178–198; these read IVMT…ISLI, VRII…DQIL, VFVG…AFAM, FVDG…VAFI, and NGLF…IWGI.

Belongs to the NqrDE/RnfAE family. As to quaternary structure, composed of six subunits; NqrA, NqrB, NqrC, NqrD, NqrE and NqrF.

It is found in the cell inner membrane. The enzyme catalyses a ubiquinone + n Na(+)(in) + NADH + H(+) = a ubiquinol + n Na(+)(out) + NAD(+). In terms of biological role, NQR complex catalyzes the reduction of ubiquinone-1 to ubiquinol by two successive reactions, coupled with the transport of Na(+) ions from the cytoplasm to the periplasm. NqrA to NqrE are probably involved in the second step, the conversion of ubisemiquinone to ubiquinol. This Pasteurella multocida (strain Pm70) protein is Na(+)-translocating NADH-quinone reductase subunit D.